The chain runs to 156 residues: Organelle RRM domain-containing protein 2, mitochondrial (156 aa).

The N-terminal 28 residues, 1–28, are a transit peptide targeting the mitochondrion; sequence MAMAMRLPAISRAVTEVASAPVGLRRLF. Residues 56–134 form the RRM domain; sequence TNLFVSGLSK…WVIFAEYARP (79 aa). Ser64 is subject to Phosphoserine. The span at 137–148 shows a compositional bias: polar residues; sequence QSQSYQPQNNMS. A disordered region spans residues 137-156; that stretch reads QSQSYQPQNNMSRPPYYGNR.

In terms of assembly, interacts with RBG3/ORRM3. Binds to RBG2/ORRM5.

Its subcellular location is the mitochondrion. In terms of biological role, involved in C-to-U editing of mitochondrial RNA. Functions as minor mitochondrial editing factor. Controls 6 percent of the mitochondrial editing sites. This Arabidopsis thaliana (Mouse-ear cress) protein is Organelle RRM domain-containing protein 2, mitochondrial.